A 194-amino-acid chain; its full sequence is Interferon alpha (194 aa).

Residues 1–23 form the signal peptide; sequence MALPSSFLVALVALGCNSVCSLG. Disulfide bonds link Cys24-Cys123 and Cys52-Cys166. A glycan (N-linked (GlcNAc...) asparagine) is linked at Asn102.

The protein belongs to the alpha/beta interferon family.

The protein localises to the secreted. Produced by macrophages, IFN-alpha have antiviral activities. Interferon stimulates the production of two enzymes: a protein kinase and an oligoadenylate synthetase. This is Interferon alpha from Felis catus (Cat).